Here is a 196-residue protein sequence, read N- to C-terminus: Indolepyruvate oxidoreductase subunit IorB (196 aa).

As to quaternary structure, heterodimer of the IorA and IorB subunits.

It carries out the reaction indole-3-pyruvate + 2 oxidized [2Fe-2S]-[ferredoxin] + CoA = (indol-3-yl)acetyl-CoA + 2 reduced [2Fe-2S]-[ferredoxin] + CO2 + H(+). Catalyzes the ferredoxin-dependent oxidative decarboxylation of arylpyruvates. The polypeptide is Indolepyruvate oxidoreductase subunit IorB (iorB) (Methanothermobacter thermautotrophicus (strain ATCC 29096 / DSM 1053 / JCM 10044 / NBRC 100330 / Delta H) (Methanobacterium thermoautotrophicum)).